The primary structure comprises 308 residues: GTP cyclohydrolase FolE2 (308 aa).

Belongs to the GTP cyclohydrolase IV family.

The enzyme catalyses GTP + H2O = 7,8-dihydroneopterin 3'-triphosphate + formate + H(+). The protein operates within cofactor biosynthesis; 7,8-dihydroneopterin triphosphate biosynthesis; 7,8-dihydroneopterin triphosphate from GTP: step 1/1. Its function is as follows. Converts GTP to 7,8-dihydroneopterin triphosphate. This chain is GTP cyclohydrolase FolE2, found in Idiomarina loihiensis (strain ATCC BAA-735 / DSM 15497 / L2-TR).